A 425-amino-acid polypeptide reads, in one-letter code: Endoplasmic reticulum junction formation protein lunapark (425 aa).

G2 carries the N-myristoyl glycine lipid modification. Over 2 to 45 (GGLFSRWRAKPSTVEVLENIDKEIQALEEFREKNQRLQKLWVGR) the chain is Cytoplasmic. Positions 15–41 (VEVLENIDKEIQALEEFREKNQRLQKL) form a coiled coil. A helical membrane pass occupies residues 46–66 (LIIYSSILYLFTCLIVYLWYL). Topologically, residues 67-77 (PDEFTARLVMT) are lumenal. The chain crosses the membrane as a helical span at residues 78-98 (LPFFAFPLIIWTLRTVLIFFF). Over 99-425 (SKRTERNNEA…EPSEESLVTK (327 aa)) the chain is Cytoplasmic. Residues 101–128 (RTERNNEALDDLKSQKKKILEEVMEKET) are a coiled coil. 5 positions are modified to phosphoserine: S114, S153, S177, S182, and S194. The interval 144-242 (KKAKEFEPPS…HPPGPPLARP (99 aa)) is disordered. Residues 186–195 (GPPPQGPVSP) are compositionally biased toward pro residues. T211 is modified (phosphothreonine). S222 is subject to Phosphoserine. A C4-type; plays a role in ER morphology zinc finger spans residues 271–296 (CQQCFSHNGMALKEEFEYIAFRCAYC). A phosphoserine mark is found at S316, S348, and S380. Residues 320–425 (RQAVEGSSST…EPSEESLVTK (106 aa)) form a disordered region. Acidic residues predominate over residues 384-398 (EPAENQEETENEETS). The residue at position 411 (S411) is a Phosphoserine.

It belongs to the lunapark family. In terms of assembly, homodimer; homodimerization requires the C4-type zinc finger motif and decreases during mitosis in a phosphorylation-dependent manner. Post-translationally, myristoylated; myristoylation is necessary for the endoplasmic reticulum (ER) three-way ER tubular junction formation, but is not required neither for membrane translocation, membrane topology formation, nor for the specific localization to ER membranes. In terms of processing, phosphorylated. Phosphorylation occurs at Ser-177, Ser-182, Ser-222, Ser-316 and Ser-380 during interphase. Phosphorylation occurs at Ser-114, Ser-153, Ser-194, Thr-211 and Ser-348 during mitosis; these phosphorylations reduce both its homodimerization and the ER three-way tubular junction formation. Subject to proteasomal degradation following phosphorylation during mitosis. In terms of tissue distribution, expressed in most tissues at basal level, with reinforcement in distal limb buds, genital bud, and in parts of the central nervous system.

The protein resides in the endoplasmic reticulum membrane. Functionally, endoplasmic reticulum (ER)-shaping membrane protein that plays a role in determining ER morphology. Involved in the stabilization of nascent three-way ER tubular junctions within the ER network. May also play a role as a curvature-stabilizing protein within three-way ER tubular junction network. May be involved in limb and central nervous system development. In Mus musculus (Mouse), this protein is Endoplasmic reticulum junction formation protein lunapark.